We begin with the raw amino-acid sequence, 131 residues long: Type IV wide pilus major component PilA4 (131 aa).

The propeptide at 1 to 6 (MRNAKG) is leader sequence. N-methylphenylalanine is present on Phe7. A helical membrane pass occupies residues 7-27 (FTLIELLIVIAIIAILAAVLI). Residues Cys95 and Cys130 are joined by a disulfide bond.

In terms of assembly, interacts with PilQ. In terms of processing, found in three forms of 14-kDa, 18-kDa and a glycosylated 23-kDa form. Both narrow and wide pili are glycosylated.

The protein localises to the cell inner membrane. It is found in the cell outer membrane. The protein resides in the periplasm. Functionally, plays an essential role in the assembly of two types of T4P pili: a wide and a narrow that participate in natural transformation and twitching motility. Major component of the wide pilus that is essential for natural transformation working as a DNA translocator structure that spans the inner and outer membranes. In addition, participates in the assembly of the narrow pilus composed of the PilA5 subunit that is required for twitching motility. In Thermus thermophilus (strain ATCC BAA-163 / DSM 7039 / HB27), this protein is Type IV wide pilus major component PilA4 (pilA4).